Here is a 452-residue protein sequence, read N- to C-terminus: Gastrin/cholecystokinin type B receptor (452 aa).

Over 1–55 (MELVKLNRSVQGSGPVASLCRPGGPLLNNSGTGNLSCEPPRIRGAGTRELELAIR) the chain is Extracellular. Residues N7, N28, and N34 are each glycosylated (N-linked (GlcNAc...) asparagine). A helical membrane pass occupies residues 56–77 (VTLYAVIFLMSVGGNILIIVVL). The Cytoplasmic segment spans residues 78–85 (GLSRRLRT). The helical transmembrane segment at 86 to 107 (VTNAFLLSLAVSDLLLAVACMP) threads the bilayer. The Extracellular portion of the chain corresponds to 108-129 (FTLLPNLMGTFIFGTVICKAVS). C125 and C203 are joined by a disulfide. Residues 130–148 (YLMGVSVSVSTLSLVAIAL) traverse the membrane as a helical segment. Over 149 to 168 (ERYSAICRPLQARVWQTRSH) the chain is Cytoplasmic. Residues 169–187 (AARVILATWLLSGLLMVPY) form a helical membrane-spanning segment. Residues 188-217 (PVYTAVQPVGPRVLQCVHRWPSARVRQTWS) lie on the Extracellular side of the membrane. Residues 218-240 (VLLLLLLFFVPGVVMAVAYGLIS) form a helical membrane-spanning segment. Residues 241–338 (RELYLGLRFD…KLLAKKRVVR (98 aa)) lie on the Cytoplasmic side of the membrane. Residues 255–285 (SESQSRVRGQGGLPGGAAPGPVHQNGRCRPE) are disordered. The segment covering 263 to 272 (GQGGLPGGAA) has biased composition (gly residues). A helical transmembrane segment spans residues 339–360 (MLLVIVVLFFMCWLPVYSANTW). Over 361-378 (RAFDGPGAHRALSGAPIS) the chain is Extracellular. The chain crosses the membrane as a helical span at residues 379-399 (FIHLLSYASACVNPLVYCFMH). The Cytoplasmic segment spans residues 400–452 (RRFRQACLDTCARCCPRPPRARPRPLPDEDPPTPSIASLSRLSYTTISTLGPG). C413 carries the S-palmitoyl cysteine lipid modification.

It belongs to the G-protein coupled receptor 1 family.

It is found in the cell membrane. In terms of biological role, receptor for gastrin and cholecystokinin. The CCK-B receptors occur throughout the central nervous system where they modulate anxiety, analgesia, arousal, and neuroleptic activity. This receptor mediates its action by association with G proteins that activate a phosphatidylinositol-calcium second messenger system. This Oryctolagus cuniculus (Rabbit) protein is Gastrin/cholecystokinin type B receptor (CCKBR).